The primary structure comprises 136 residues: Mitochondrial pyruvate carrier 1-like protein (136 aa).

At 2–19 (ARMAVLWRKMRDNFQSKE) the chain is on the mitochondrial matrix side. Residues 20–42 (FREYVSSTHFWGPAFSWGLPLAA) traverse the membrane as a helical segment. Residues 43–51 (FKDMKASPE) lie on the Mother cell cytoplasmic side of the membrane. Residues 52–74 (IISGRMTTALILYSAIFMRFAYR) form a helical membrane-spanning segment. Residues 75–136 (VQPRNLLLMA…PGSQPPKQAS (62 aa)) are Mitochondrial matrix-facing. The interval 111-136 (EAKARDPPATAAAATSPGSQPPKQAS) is disordered. The span at 117–136 (PPATAAAATSPGSQPPKQAS) shows a compositional bias: low complexity.

This sequence belongs to the mitochondrial pyruvate carrier (MPC) (TC 2.A.105) family.

The protein resides in the mitochondrion inner membrane. It catalyses the reaction pyruvate(out) + H(+)(out) = pyruvate(in) + H(+)(in). Its function is as follows. Mediates the uptake of pyruvate into mitochondria. This is Mitochondrial pyruvate carrier 1-like protein (MPC1L) from Homo sapiens (Human).